We begin with the raw amino-acid sequence, 258 residues long: Cell division protein FtsQ (258 aa).

At 1–29 (MAKNAPAPRGARRKPVKKVGVPLRERVAT) the chain is on the cytoplasmic side. A helical membrane pass occupies residues 30-50 (AVPWMLVGSVAMVSLLAVIYL). Topologically, residues 51-258 (PAALDGYPIR…MAVTWREQQS (208 aa)) are periplasmic. Residues 57 to 127 (YPIRKVGVDG…DTVVLTVEER (71 aa)) enclose the POTRA domain.

It belongs to the FtsQ/DivIB family. FtsQ subfamily. In terms of assembly, part of a complex composed of FtsB, FtsL and FtsQ.

It is found in the cell inner membrane. Essential cell division protein. May link together the upstream cell division proteins, which are predominantly cytoplasmic, with the downstream cell division proteins, which are predominantly periplasmic. May control correct divisome assembly. This Alcanivorax borkumensis (strain ATCC 700651 / DSM 11573 / NCIMB 13689 / SK2) protein is Cell division protein FtsQ.